The primary structure comprises 448 residues: Beta-alanine--pyruvate aminotransferase (448 aa).

Tryptophan 61 serves as a coordination point for substrate. Position 120–121 (120–121) interacts with pyridoxal 5'-phosphate; it reads GS. Lysine 288 is subject to N6-(pyridoxal phosphate)lysine. Position 327 (threonine 327) interacts with pyridoxal 5'-phosphate. Substrate contacts are provided by arginine 414 and glutamine 421.

Belongs to the class-III pyridoxal-phosphate-dependent aminotransferase family. In terms of assembly, homotetramer. It depends on pyridoxal 5'-phosphate as a cofactor.

It catalyses the reaction 3-oxopropanoate + L-alanine = beta-alanine + pyruvate. Inhibited by gabaculine (5-amino-1,3-cyclohexadienylcarboxylic acid). Functionally, involved in the degradation of beta-alanine. Catalyzes the transfer of the amino group from beta-alanine to pyruvate to yield L-alanine and 3-oxopropanoate. It can also accept both 4-aminobutyrate and (S)-alpha-methylbenzylamine (MBA) as amino-group donors in the presence of pyruvate as an amine acceptor. The protein is Beta-alanine--pyruvate aminotransferase (bauA) of Pseudomonas aeruginosa (strain ATCC 15692 / DSM 22644 / CIP 104116 / JCM 14847 / LMG 12228 / 1C / PRS 101 / PAO1).